A 121-amino-acid chain; its full sequence is Large ribosomal subunit protein uL14 (121 aa).

It belongs to the universal ribosomal protein uL14 family. Part of the 50S ribosomal subunit. Forms a cluster with proteins L3 and L19. In the 70S ribosome, L14 and L19 interact and together make contacts with the 16S rRNA in bridges B5 and B8.

Binds to 23S rRNA. Forms part of two intersubunit bridges in the 70S ribosome. This Akkermansia muciniphila (strain ATCC BAA-835 / DSM 22959 / JCM 33894 / BCRC 81048 / CCUG 64013 / CIP 107961 / Muc) protein is Large ribosomal subunit protein uL14.